Reading from the N-terminus, the 504-residue chain is Beta-xylosidase (504 aa).

Catalysis depends on glutamate 160, which acts as the Proton donor. Glutamate 280 acts as the Nucleophile in catalysis.

This sequence belongs to the glycosyl hydrolase 39 family.

The enzyme catalyses Hydrolysis of (1-&gt;4)-beta-D-xylans, to remove successive D-xylose residues from the non-reducing termini.. The protein is Beta-xylosidase (xynB) of Geobacillus stearothermophilus (Bacillus stearothermophilus).